Here is a 92-residue protein sequence, read N- to C-terminus: uncharacterized protein (92 aa).

This is an uncharacterized protein from Saccharomyces cerevisiae (strain ATCC 204508 / S288c) (Baker's yeast).